The chain runs to 244 residues: Phosphonates import ATP-binding protein PhnC 2 (244 aa).

The 239-residue stretch at Ile6–Gln244 folds into the ABC transporter domain. Gly41–Ser48 contacts ATP.

This sequence belongs to the ABC transporter superfamily. Phosphonates importer (TC 3.A.1.9.1) family. In terms of assembly, the complex is composed of two ATP-binding proteins (PhnC), two transmembrane proteins (PhnE) and a solute-binding protein (PhnD).

The protein resides in the cell inner membrane. The catalysed reaction is phosphonate(out) + ATP + H2O = phosphonate(in) + ADP + phosphate + H(+). Part of the ABC transporter complex PhnCDE involved in phosphonates import. Responsible for energy coupling to the transport system. The sequence is that of Phosphonates import ATP-binding protein PhnC 2 from Nostoc sp. (strain PCC 7120 / SAG 25.82 / UTEX 2576).